The primary structure comprises 124 residues: 14 kDa peptide of ubiquinol-cytochrome c2 oxidoreductase complex (124 aa).

Residues 85–102 form a helical membrane-spanning segment; sequence LGGFASGALLALALAGIF.

Its subcellular location is the cell inner membrane. Functionally, component of the ubiquinol-cytochrome c reductase complex (complex III or cytochrome b-c1 complex), which is a respiratory chain that generates an electrochemical potential coupled to ATP synthesis. This Cereibacter sphaeroides (Rhodobacter sphaeroides) protein is 14 kDa peptide of ubiquinol-cytochrome c2 oxidoreductase complex.